The following is a 1607-amino-acid chain: Dicer-like protein 1 (1607 aa).

The tract at residues 1–74 (MNAEMREGSS…PDTKKWIVND (74 aa)) is disordered. One can recognise a Helicase ATP-binding domain in the interval 142–324 (LFERAKTQNT…IARSPELEGL (183 aa)). 155–162 (LDTGSGKT) is an ATP binding site. A DEAH box motif is present at residues 267–270 (DEAH). The 172-residue stretch at 461-632 (KVVILLRILR…EALPADRKLT (172 aa)) folds into the Helicase C-terminal domain. The Dicer dsRNA-binding fold domain maps to 665–755 (SLICLAAFVA…RPTFTKQLPA (91 aa)). Residues 905 to 1040 (GAVTFVRDNE…IVLEPLRISP (136 aa)) form the PAZ domain. 2 consecutive RNase III domains span residues 1063-1219 (LVAL…LTAQ) and 1272-1447 (AARF…VDSR). E1312, D1433, and E1436 together coordinate Mg(2+). In terms of domain architecture, DRBM spans 1478-1556 (HPVTFLAGIM…AKKAIQVLEG (79 aa)). Positions 1493, 1527, 1568, and 1570 each coordinate Zn(2+).

The protein belongs to the helicase family. Dicer subfamily. The cofactor is Mg(2+). Requires Mn(2+) as cofactor.

In terms of biological role, dicer-like endonuclease involved in cleaving double-stranded RNA in the RNA interference (RNAi) pathway. Produces 21 to 25 bp dsRNAs (siRNAs) which target the selective destruction of homologous RNAs leading to sequence-specific suppression of gene expression, called post-transcriptional gene silencing (PTGS). Part of a broad host defense response against viral infection and transposons. This is Dicer-like protein 1 (DCL1) from Chaetomium globosum (strain ATCC 6205 / CBS 148.51 / DSM 1962 / NBRC 6347 / NRRL 1970) (Soil fungus).